A 113-amino-acid chain; its full sequence is Flagellar hook-basal body complex protein FliE (113 aa).

It belongs to the FliE family.

It is found in the bacterial flagellum basal body. This Rhizobium etli (strain CIAT 652) protein is Flagellar hook-basal body complex protein FliE.